A 196-amino-acid chain; its full sequence is Probable thymidylate kinase (196 aa).

Residue 9–16 (GIDGSGKT) participates in ATP binding.

The protein belongs to the thymidylate kinase family.

The catalysed reaction is dTMP + ATP = dTDP + ADP. The sequence is that of Probable thymidylate kinase from Methanococcus aeolicus (strain ATCC BAA-1280 / DSM 17508 / OCM 812 / Nankai-3).